The chain runs to 430 residues: Adenylosuccinate synthetase (430 aa).

GTP-binding positions include 12-18 and 40-42; these read GDEGKGK and GHT. The Proton acceptor role is filled by Asp-13. 2 residues coordinate Mg(2+): Asp-13 and Gly-40. Residues 13–16, 38–41, Thr-128, Arg-142, Gln-223, Thr-238, and Arg-302 each bind IMP; these read DEGK and NAGH. Residue His-41 is the Proton donor of the active site. Residue 298-304 participates in substrate binding; that stretch reads TTTGRPR. GTP-binding positions include Arg-304, 330–332, and 412–414; these read SID and SVG.

Belongs to the adenylosuccinate synthetase family. Homodimer. The cofactor is Mg(2+).

Its subcellular location is the cytoplasm. It carries out the reaction IMP + L-aspartate + GTP = N(6)-(1,2-dicarboxyethyl)-AMP + GDP + phosphate + 2 H(+). It functions in the pathway purine metabolism; AMP biosynthesis via de novo pathway; AMP from IMP: step 1/2. Plays an important role in the de novo pathway of purine nucleotide biosynthesis. Catalyzes the first committed step in the biosynthesis of AMP from IMP. This is Adenylosuccinate synthetase from Streptococcus sanguinis (strain SK36).